A 427-amino-acid chain; its full sequence is 3-phosphoshikimate 1-carboxyvinyltransferase (427 aa).

3-phosphoshikimate contacts are provided by lysine 22, serine 23, and arginine 27. Residue lysine 22 coordinates phosphoenolpyruvate. Residues glycine 93 and arginine 122 each contribute to the phosphoenolpyruvate site. 3-phosphoshikimate is bound by residues serine 167, glutamine 169, aspartate 315, and lysine 342. Residue glutamine 169 participates in phosphoenolpyruvate binding. The active-site Proton acceptor is aspartate 315. Phosphoenolpyruvate contacts are provided by arginine 346 and arginine 387.

The protein belongs to the EPSP synthase family. In terms of assembly, monomer.

It localises to the cytoplasm. It carries out the reaction 3-phosphoshikimate + phosphoenolpyruvate = 5-O-(1-carboxyvinyl)-3-phosphoshikimate + phosphate. The protein operates within metabolic intermediate biosynthesis; chorismate biosynthesis; chorismate from D-erythrose 4-phosphate and phosphoenolpyruvate: step 6/7. Functionally, catalyzes the transfer of the enolpyruvyl moiety of phosphoenolpyruvate (PEP) to the 5-hydroxyl of shikimate-3-phosphate (S3P) to produce enolpyruvyl shikimate-3-phosphate and inorganic phosphate. In Thermus thermophilus (strain ATCC 27634 / DSM 579 / HB8), this protein is 3-phosphoshikimate 1-carboxyvinyltransferase.